The primary structure comprises 382 residues: Heme A synthase (382 aa).

The next 7 helical transmembrane spans lie at 37–57 (IRVW…VGGL), 126–146 (VIGV…QVPA), 152–172 (LLFL…MVAS), 188–208 (LATH…YIME), 231–251 (STGL…VAGI), 288–308 (LVQF…VVVW), and 332–352 (LQIV…IAIF). His293 lines the heme pocket. His353 is a heme binding site. The helical transmembrane segment at 356-376 (LAVIVWVLILRARFLSGYPIA) threads the bilayer.

The protein belongs to the COX15/CtaA family. Type 2 subfamily. As to quaternary structure, interacts with CtaB. It depends on heme b as a cofactor.

The protein localises to the cell membrane. It carries out the reaction Fe(II)-heme o + 2 A + H2O = Fe(II)-heme a + 2 AH2. Its pathway is porphyrin-containing compound metabolism; heme A biosynthesis; heme A from heme O: step 1/1. Functionally, catalyzes the conversion of heme O to heme A by two successive hydroxylations of the methyl group at C8. The first hydroxylation forms heme I, the second hydroxylation results in an unstable dihydroxymethyl group, which spontaneously dehydrates, resulting in the formyl group of heme A. This Roseobacter denitrificans (strain ATCC 33942 / OCh 114) (Erythrobacter sp. (strain OCh 114)) protein is Heme A synthase.